We begin with the raw amino-acid sequence, 283 residues long: Formamidopyrimidine-DNA glycosylase (283 aa).

P2 acts as the Schiff-base intermediate with DNA in catalysis. Catalysis depends on E3, which acts as the Proton donor. Catalysis depends on K60, which acts as the Proton donor; for beta-elimination activity. Residues H95, R114, and R159 each coordinate DNA. The FPG-type zinc finger occupies 244–278 (WVYGRHNQPCRVCGTPIERIKLGGRSSHFCPQCQP). The active-site Proton donor; for delta-elimination activity is the R268.

The protein belongs to the FPG family. As to quaternary structure, monomer. Zn(2+) serves as cofactor.

It catalyses the reaction Hydrolysis of DNA containing ring-opened 7-methylguanine residues, releasing 2,6-diamino-4-hydroxy-5-(N-methyl)formamidopyrimidine.. The catalysed reaction is 2'-deoxyribonucleotide-(2'-deoxyribose 5'-phosphate)-2'-deoxyribonucleotide-DNA = a 3'-end 2'-deoxyribonucleotide-(2,3-dehydro-2,3-deoxyribose 5'-phosphate)-DNA + a 5'-end 5'-phospho-2'-deoxyribonucleoside-DNA + H(+). Involved in base excision repair of DNA damaged by oxidation or by mutagenic agents. Acts as a DNA glycosylase that recognizes and removes damaged bases. Has a preference for oxidized purines, such as 7,8-dihydro-8-oxoguanine (8-oxoG). Has AP (apurinic/apyrimidinic) lyase activity and introduces nicks in the DNA strand. Cleaves the DNA backbone by beta-delta elimination to generate a single-strand break at the site of the removed base with both 3'- and 5'-phosphates. In Crocosphaera subtropica (strain ATCC 51142 / BH68) (Cyanothece sp. (strain ATCC 51142)), this protein is Formamidopyrimidine-DNA glycosylase.